Consider the following 502-residue polypeptide: ATP synthase subunit alpha (502 aa).

Position 169-176 (169-176 (GDRATGKT)) interacts with ATP.

It belongs to the ATPase alpha/beta chains family. As to quaternary structure, F-type ATPases have 2 components, CF(1) - the catalytic core - and CF(0) - the membrane proton channel. CF(1) has five subunits: alpha(3), beta(3), gamma(1), delta(1), epsilon(1). CF(0) has three main subunits: a(1), b(2) and c(9-12). The alpha and beta chains form an alternating ring which encloses part of the gamma chain. CF(1) is attached to CF(0) by a central stalk formed by the gamma and epsilon chains, while a peripheral stalk is formed by the delta and b chains.

The protein resides in the cell inner membrane. It catalyses the reaction ATP + H2O + 4 H(+)(in) = ADP + phosphate + 5 H(+)(out). Its function is as follows. Produces ATP from ADP in the presence of a proton gradient across the membrane. The alpha chain is a regulatory subunit. This is ATP synthase subunit alpha from Hydrogenobaculum sp. (strain Y04AAS1).